Reading from the N-terminus, the 167-residue chain is Sporulation membrane protein YtrI (167 aa).

A helical transmembrane segment spans residues 15-35 (FFAGMMCGAVISWFFFLFTYG).

It is found in the cell membrane. Functionally, involved in sporulation. This Bacillus subtilis (strain 168) protein is Sporulation membrane protein YtrI (ytrI).